The chain runs to 247 residues: 14-3-3 protein gamma-1 (247 aa).

The protein belongs to the 14-3-3 family. In terms of assembly, homodimer, and heterodimer with other family members.

It localises to the cytoplasm. Its function is as follows. Adapter protein implicated in the regulation of a large spectrum of both general and specialized signaling pathways. Binds to a large number of partners, usually by recognition of a phosphoserine or phosphothreonine motif. Binding generally results in the modulation of the activity of the binding partner. In Danio rerio (Zebrafish), this protein is 14-3-3 protein gamma-1 (ywhag1).